Reading from the N-terminus, the 269-residue chain is Spermatogenesis-associated serine-rich protein 1 (269 aa).

Residues 1–14 show a composition bias toward basic and acidic residues; that stretch reads MESSKDTQHGDALE. Residues 1 to 92 are disordered; that stretch reads MESSKDTQHG…SKVSLPEIPK (92 aa). Polar residues predominate over residues 18–38; the sequence is CLANRTSSRQNKRTSLSSSDG. T54 carries the post-translational modification Phosphothreonine. Low complexity predominate over residues 67-86; that stretch reads SSSSSSSSSSAQSNRSSKVS. S72, S75, and S82 each carry phosphoserine.

In Mus musculus (Mouse), this protein is Spermatogenesis-associated serine-rich protein 1 (Spats1).